A 793-amino-acid chain; its full sequence is Signal transducer and activator of transcription 5A (793 aa).

Tyr90 is subject to Phosphotyrosine. Position 128 is a phosphoserine (Ser128). One can recognise an SH2 domain in the interval 589–686 (WNDGAILGFV…EVFAKYYTPV (98 aa)). Residues Tyr682 and Tyr694 each carry the phosphotyrosine modification. Ser779 carries the post-translational modification Phosphoserine.

The protein belongs to the transcription factor STAT family. Forms a homodimer or a heterodimer with a related family member. Interacts with NCOA1 and SOCS7. Binds NR3C1. Interacts with ERBB4. Interacts with EBF4. Interacts with CD69. Post-translationally, ISGylated. In terms of processing, tyrosine phosphorylated in response to KITLG/SCF, IL2, IL3, IL7, IL15, CSF2/GMCSF, GH1, PRL, EPO and THPO. Activated KIT promotes phosphorylation on tyrosine residues and subsequent translocation to the nucleus. Tyrosine phosphorylated in response to constitutively activated FGFR1, FGFR2, FGFR3 and FGFR4. Tyrosine phosphorylation is required for DNA-binding activity and dimerization. Serine phosphorylation is also required for maximal transcriptional activity. Tyrosine phosphorylated in response to signaling via activated FLT3; wild-type FLT3 results in much weaker phosphorylation than constitutively activated mutant FLT3. Alternatively, can be phosphorylated by JAK2 at Tyr-694. In the virgin, found in most tissues except brain and muscle. During lactation, abundantly found in mammary tissue, as well as in other secretory organs such as salivary gland and seminal vesicle.

The protein resides in the cytoplasm. It is found in the nucleus. Functionally, carries out a dual function: signal transduction and activation of transcription. Mediates cellular responses to the cytokine KITLG/SCF and other growth factors. May mediate cellular responses to activated FGFR1, FGFR2, FGFR3 and FGFR4. Binds to the GAS element and activates PRL-induced transcription. Regulates the expression of milk proteins during lactation. This chain is Signal transducer and activator of transcription 5A (Stat5a), found in Mus musculus (Mouse).